The chain runs to 368 residues: MKLDSIDITHCQLVKSTRTARIYRSDTYAIKCLALDFDIPPHNAKFEVSILNKLGNKCKHILPLLESKATDNNDLLLLFPFEEMNLYEFMQMHYKRDRRKKNPYYDLLNPSIPIVADPPVQKYTNQLDVNRYSLSFFRQMVEGIAFLHENKIIHRDIKPQNIMLTNNTSTVSPKLYIIDFGISYDMANNSQTSAEPMDSKVTDISTGIYKAPEVLFGVKCYDGGVDVWSLLIIISQWFQRETSRMGHVPAMIDDGSDDMNSDGSDFRLICSIFEKLGIPSIQKWEEVAQHGSVDAFVGMFGADGDGKYVLDQEKDVQISIVERNMPRLDEIADVKVKQKFINCILGMVSFSPNERWSCQRILQELEKP.

The 368-residue stretch at 1-368 (MKLDSIDITH…QRILQELEKP (368 aa)) folds into the Protein kinase domain. The active-site Proton acceptor is the Asp156.

Belongs to the protein kinase superfamily. CMGC Ser/Thr protein kinase family. CDC2/CDKX subfamily.

The enzyme catalyses L-seryl-[protein] + ATP = O-phospho-L-seryl-[protein] + ADP + H(+). It carries out the reaction L-threonyl-[protein] + ATP = O-phospho-L-threonyl-[protein] + ADP + H(+). The sequence is that of Serine/threonine-protein kinase CAK1 (CAK1) from Saccharomyces cerevisiae (strain ATCC 204508 / S288c) (Baker's yeast).